Consider the following 287-residue polypeptide: Phosphatidylserine decarboxylase proenzyme (287 aa).

Catalysis depends on charge relay system; for autoendoproteolytic cleavage activity residues Asp90, His147, and Ser252. Residue Ser252 is the Schiff-base intermediate with substrate; via pyruvic acid; for decarboxylase activity of the active site. A Pyruvic acid (Ser); by autocatalysis modification is found at Ser252.

It belongs to the phosphatidylserine decarboxylase family. PSD-B subfamily. Prokaryotic type I sub-subfamily. Heterodimer of a large membrane-associated beta subunit and a small pyruvoyl-containing alpha subunit. The cofactor is pyruvate. In terms of processing, is synthesized initially as an inactive proenzyme. Formation of the active enzyme involves a self-maturation process in which the active site pyruvoyl group is generated from an internal serine residue via an autocatalytic post-translational modification. Two non-identical subunits are generated from the proenzyme in this reaction, and the pyruvate is formed at the N-terminus of the alpha chain, which is derived from the carboxyl end of the proenzyme. The autoendoproteolytic cleavage occurs by a canonical serine protease mechanism, in which the side chain hydroxyl group of the serine supplies its oxygen atom to form the C-terminus of the beta chain, while the remainder of the serine residue undergoes an oxidative deamination to produce ammonia and the pyruvoyl prosthetic group on the alpha chain. During this reaction, the Ser that is part of the protease active site of the proenzyme becomes the pyruvoyl prosthetic group, which constitutes an essential element of the active site of the mature decarboxylase.

Its subcellular location is the cell membrane. It carries out the reaction a 1,2-diacyl-sn-glycero-3-phospho-L-serine + H(+) = a 1,2-diacyl-sn-glycero-3-phosphoethanolamine + CO2. It functions in the pathway phospholipid metabolism; phosphatidylethanolamine biosynthesis; phosphatidylethanolamine from CDP-diacylglycerol: step 2/2. In terms of biological role, catalyzes the formation of phosphatidylethanolamine (PtdEtn) from phosphatidylserine (PtdSer). This chain is Phosphatidylserine decarboxylase proenzyme, found in Pseudomonas putida (strain GB-1).